Reading from the N-terminus, the 247-residue chain is MTTLFISDLHLDPARPAITELFLDFLRTQVPGSDALYILGDLFEAWIGDDTPSTAADAVAEALHAVATTGVPVFFMPGNRDFLVGAAYAQRAGFRILPDPTVIDLYGQPTLLMHGDLLCTDDTAYQAFRAQTRDPAFQAQFLSQPLAARVAFAQQARAASHARQSELKQGDQAQFETVTDVAPAEVDATFVRYGLDRIIHGHTHRPAIHIVQAGGRTCTRVVLGDWYEQGSVLRVDADGLALEQLAL.

Mn(2+) is bound by residues aspartate 8, histidine 10, aspartate 41, asparagine 79, and histidine 114. 79 to 80 serves as a coordination point for substrate; the sequence is NR. Aspartate 122, serine 160, aspartate 171, glutamine 174, and histidine 202 together coordinate substrate. Mn(2+)-binding residues include histidine 202 and histidine 204.

This sequence belongs to the LpxH family. The cofactor is Mn(2+).

The protein resides in the cell inner membrane. The catalysed reaction is UDP-2-N,3-O-bis[(3R)-3-hydroxytetradecanoyl]-alpha-D-glucosamine + H2O = 2-N,3-O-bis[(3R)-3-hydroxytetradecanoyl]-alpha-D-glucosaminyl 1-phosphate + UMP + 2 H(+). It functions in the pathway glycolipid biosynthesis; lipid IV(A) biosynthesis; lipid IV(A) from (3R)-3-hydroxytetradecanoyl-[acyl-carrier-protein] and UDP-N-acetyl-alpha-D-glucosamine: step 4/6. Functionally, hydrolyzes the pyrophosphate bond of UDP-2,3-diacylglucosamine to yield 2,3-diacylglucosamine 1-phosphate (lipid X) and UMP by catalyzing the attack of water at the alpha-P atom. Involved in the biosynthesis of lipid A, a phosphorylated glycolipid that anchors the lipopolysaccharide to the outer membrane of the cell. The sequence is that of UDP-2,3-diacylglucosamine hydrolase from Xanthomonas campestris pv. campestris (strain B100).